A 472-amino-acid polypeptide reads, in one-letter code: Transmembrane protein 8B (472 aa).

The span at 1–10 shows a compositional bias: low complexity; that stretch reads MNMPQSLGTQ. The tract at residues 1-24 is disordered; sequence MNMPQSLGTQPLPPEPPSLGTPIE. Residues 1–233 lie on the Extracellular side of the membrane; it reads MNMPQSLGTQ…ADALTYGFQL (233 aa). Residue Asn-100 is glycosylated (N-linked (GlcNAc...) asparagine). Residues 182–221 form the EGF-like domain; sequence FLSPCVDDCGPYGQCKLLRTHNYLYAACECKAGWRGWGCT. 3 disulfide bridges follow: Cys-186/Cys-196, Cys-190/Cys-209, and Cys-211/Cys-220. A helical transmembrane segment spans residues 234 to 254; it reads LSTLLLCLSNLMFLPPVVLAI. At 255–257 the chain is on the cytoplasmic side; it reads RSR. Residues 258–277 traverse the membrane as a helical segment; the sequence is YVLEAAVYTFTMFFSTFYHA. Over 278–292 the chain is Extracellular; the sequence is CDQPGIVVFCIMDYD. The chain crosses the membrane as a helical span at residues 293–313; sequence VLQFCDFLGSLMSVWVTVIAM. Over 314-315 the chain is Cytoplasmic; the sequence is AR. Residues 316 to 336 form a helical membrane-spanning segment; the sequence is LQPVIKQVLYLLGAMLLSMAL. The Extracellular portion of the chain corresponds to 337–342; the sequence is QLDRHG. A helical membrane pass occupies residues 343–363; sequence LWNLLGPSLFALGILATAWTV. Over 364–379 the chain is Cytoplasmic; sequence RSVRRRHCYPPTWRRW. A helical transmembrane segment spans residues 380-400; sequence LFYLCPGSLIAGSAVLLYAFV. Residues 401-405 are Extracellular-facing; sequence ETRDN. Residues 406-426 traverse the membrane as a helical segment; sequence YFYIHSIWHMLIAGSVGFLLP. The Cytoplasmic portion of the chain corresponds to 427–472; that stretch reads PRAKTDRRVPSGARARGCGYQLCINEQEELGLVGPGGTTVSSICVS.

The protein belongs to the TMEM8 family. May interact with EZR. In terms of processing, N-glycosylated.

It is found in the cell membrane. It localises to the cytoplasm. The protein resides in the nucleus. The protein localises to the mitochondrion. Its subcellular location is the endoplasmic reticulum. In terms of biological role, may function as a regulator of the EGFR pathway. Probable tumor suppressor which may function in cell growth, proliferation and adhesion. This chain is Transmembrane protein 8B (Tmem8b), found in Mus musculus (Mouse).